Here is a 458-residue protein sequence, read N- to C-terminus: Probable Xaa-Pro aminopeptidase pepP (458 aa).

Residues Asp-254, Asp-265, Glu-388, and Glu-428 each coordinate Mn(2+).

It belongs to the peptidase M24B family. Requires Mn(2+) as cofactor.

The enzyme catalyses Release of any N-terminal amino acid, including proline, that is linked to proline, even from a dipeptide or tripeptide.. In terms of biological role, catalyzes the removal of a penultimate prolyl residue from the N-termini of peptides. This chain is Probable Xaa-Pro aminopeptidase pepP (pepP), found in Botryotinia fuckeliana (strain B05.10) (Noble rot fungus).